Here is a 358-residue protein sequence, read N- to C-terminus: tRNA-specific 2-thiouridylase MnmA (358 aa).

Residues Ala10–Ser17 and Met36 each bind ATP. Catalysis depends on Cys105, which acts as the Nucleophile. An intrachain disulfide couples Cys105 to Cys202. Gly129 is an ATP binding site. Residues Lys152–Gln154 are interaction with tRNA. Catalysis depends on Cys202, which acts as the Cysteine persulfide intermediate. Positions Arg308–Tyr309 are interaction with tRNA.

This sequence belongs to the MnmA/TRMU family.

Its subcellular location is the cytoplasm. The enzyme catalyses S-sulfanyl-L-cysteinyl-[protein] + uridine(34) in tRNA + AH2 + ATP = 2-thiouridine(34) in tRNA + L-cysteinyl-[protein] + A + AMP + diphosphate + H(+). In terms of biological role, catalyzes the 2-thiolation of uridine at the wobble position (U34) of tRNA, leading to the formation of s(2)U34. The protein is tRNA-specific 2-thiouridylase MnmA of Magnetococcus marinus (strain ATCC BAA-1437 / JCM 17883 / MC-1).